Consider the following 227-residue polypeptide: Transcriptional regulatory protein TdiR (227 aa).

Positions 11–125 constitute a Response regulatory domain; the sequence is TVFVVDDEAS…DLLDAVNAAL (115 aa). 4-aspartylphosphate is present on aspartate 60. An HTH luxR-type domain is found at 141-206; that stretch reads HLDLLATLSQ…DLMHFVMRGS (66 aa). Residues 165–184 constitute a DNA-binding region (H-T-H motif); it reads SKEIAKLLGISYKTVEAHRG.

Phosphorylated by TdiS.

Functionally, member of the two-component regulatory system TdiR/TdiS, which probably regulates transcription of toluene catabolic genes (bss operon). Binds to DNA. The polypeptide is Transcriptional regulatory protein TdiR (tdiR) (Thauera aromatica).